We begin with the raw amino-acid sequence, 314 residues long: Splicing factor YJU2 (314 aa).

Zn(2+) contacts are provided by Cys-43, Cys-46, Cys-80, and Cys-83. Disordered stretches follow at residues 178–238 (MSQE…NEVP) and 253–314 (LAGL…DSDS). The span at 200 to 209 (EEARHRRLLE) shows a compositional bias: basic and acidic residues. 3 positions are modified to phosphoserine: Ser-211, Ser-213, and Ser-220. Residues 222–232 (PRAAARPNPTA) are compositionally biased toward low complexity. Polar residues predominate over residues 290 to 302 (PTPQTPGTSSLSQ). Phosphoserine is present on residues Ser-309, Ser-312, and Ser-314.

The protein belongs to the CWC16 family. YJU2 subfamily. Component of the spliceosome. Present in the activated B complex, the catalytically activated B* complex which catalyzes the branching, the catalytic step 1 C complex catalyzing the exon ligation, and the postcatalytic P complex containing the ligated exons (mRNA) and the excised lariat intron.

The protein resides in the nucleus. Functionally, part of the spliceosome which catalyzes two sequential transesterification reactions, first the excision of the non-coding intron from pre-mRNA and then the ligation of the coding exons to form the mature mRNA. Plays a role in stabilizing the structure of the spliceosome catalytic core and docking of the branch helix into the active site, producing 5'-exon and lariat intron-3'-intermediates. May protect cells from TP53-dependent apoptosis upon dsDNA break damage through association with PRP19-CD5L complex. The chain is Splicing factor YJU2 from Mus musculus (Mouse).